The sequence spans 98 residues: Co-chaperonin GroES (98 aa).

Belongs to the GroES chaperonin family. In terms of assembly, heptamer of 7 subunits arranged in a ring. Interacts with the chaperonin GroEL.

The protein localises to the cytoplasm. Its function is as follows. Together with the chaperonin GroEL, plays an essential role in assisting protein folding. The GroEL-GroES system forms a nano-cage that allows encapsulation of the non-native substrate proteins and provides a physical environment optimized to promote and accelerate protein folding. GroES binds to the apical surface of the GroEL ring, thereby capping the opening of the GroEL channel. The sequence is that of Co-chaperonin GroES from Micrococcus luteus (strain ATCC 4698 / DSM 20030 / JCM 1464 / CCM 169 / CCUG 5858 / IAM 1056 / NBRC 3333 / NCIMB 9278 / NCTC 2665 / VKM Ac-2230) (Micrococcus lysodeikticus).